A 595-amino-acid chain; its full sequence is MATELLCLHRPISLTHKLFRNPLPKVIQATPLTLKLRCSVSTENVSFSETETETRRSANYEPNSWDYDYLLSSDTDESIEVHKDKAKKLEAEVRREINNEKAEFLTLLELIDNVQRLGLGYRFESDIRRALDRFVSSGGFDGVTKTSLHGTALSFRLLRQHGFEVSQEAFSGFKDQNGNFLENLKEDIKAILSLYEASFLALEGENILDEAKVFAISHLKELSEEKIGKELAEQVSHALELPLHRRTQRLEAVWSIEAYRKKEDANQVLLELAILDYNMIQSVYQRDLRETSRWWRRVGLATKLHFARDRLIESFYWAVGVAFEPQYSDCRNSVAKMFSFVTIIDDIYDVYGTLDELELFTDAVERWDVNAINDLPDYMKLCFLALYNTINEIAYDNLKDKGENILPYLTKAWADLCNAFLQEAKWLYNKSTPTFDDYFGNAWKSSSGPLQLIFAYFAVVQNIKKEEIENLQKYHDIISRPSHIFRLCNDLASASAEIARGETANSVSCYMRTKGISEELATESVMNLIDETWKKMNKEKLGGSLFAKPFVETAINLARQSHCTYHNGDAHTSPDELTRKRVLSVITEPILPFER.

Residues 1 to 37 constitute a chloroplast transit peptide; the sequence is MATELLCLHRPISLTHKLFRNPLPKVIQATPLTLKLR. A dimethylallyl diphosphate-binding site is contributed by Asp345. The Mg(2+) site is built by Asp345 and Asp349. The DDXXD motif motif lies at 345–349; the sequence is DDIYD. Positions 423, 486, and 489 each coordinate dimethylallyl diphosphate. 3 residues coordinate Mg(2+): Asn489, Ser493, and Glu497.

The protein belongs to the terpene synthase family. Tpsb subfamily. The cofactor is Mg(2+). Mn(2+) serves as cofactor.

It localises to the plastid. The protein localises to the chloroplast. It catalyses the reaction dimethylallyl diphosphate = isoprene + diphosphate. In terms of biological role, lyase that catalyzes the formation of isoprene from dimethylallyl diphosphate. The polypeptide is Isoprene synthase, chloroplastic (ISPS) (Populus tremuloides (Quaking aspen)).